Consider the following 158-residue polypeptide: 6,7-dimethyl-8-ribityllumazine synthase (158 aa).

5-amino-6-(D-ribitylamino)uracil-binding positions include Phe-24, Ala-58–Glu-60, and Ala-82–Ile-84. Residue Gly-87–Thr-88 coordinates (2S)-2-hydroxy-3-oxobutyl phosphate. Catalysis depends on His-90, which acts as the Proton donor. A 5-amino-6-(D-ribitylamino)uracil-binding site is contributed by Phe-115. Residue Arg-129 participates in (2S)-2-hydroxy-3-oxobutyl phosphate binding.

It belongs to the DMRL synthase family. As to quaternary structure, forms an icosahedral capsid composed of 60 subunits, arranged as a dodecamer of pentamers.

It catalyses the reaction (2S)-2-hydroxy-3-oxobutyl phosphate + 5-amino-6-(D-ribitylamino)uracil = 6,7-dimethyl-8-(1-D-ribityl)lumazine + phosphate + 2 H2O + H(+). The protein operates within cofactor biosynthesis; riboflavin biosynthesis; riboflavin from 2-hydroxy-3-oxobutyl phosphate and 5-amino-6-(D-ribitylamino)uracil: step 1/2. Functionally, catalyzes the formation of 6,7-dimethyl-8-ribityllumazine by condensation of 5-amino-6-(D-ribitylamino)uracil with 3,4-dihydroxy-2-butanone 4-phosphate. This is the penultimate step in the biosynthesis of riboflavin. This chain is 6,7-dimethyl-8-ribityllumazine synthase, found in Ectopseudomonas mendocina (strain ymp) (Pseudomonas mendocina).